A 149-amino-acid chain; its full sequence is MLDPTEKVIDSESMESKLTSVDAIEEHSSSSSNEAISNEKKSCAICGTSKTPLWRGGPAGPKSLCNACGIRNRKKRRTLISNRSEDKKKKSHNRNPKFGDSLKQRLMELGREVMMQRSTAENQRRNKLGEEEQAAVLLMALSYASSVYA.

Basic and acidic residues predominate over residues M1–D10. 2 disordered regions span residues M1 to K41 and R76 to L102. The segment at S37–S91 adopts a GATA-type zinc-finger fold.

It belongs to the type IV zinc-finger family. Class B subfamily.

The protein resides in the nucleus. Transcriptional regulator that specifically binds 5'-GATA-3' or 5'-GAT-3' motifs within gene promoters. This is GATA transcription factor 15 (GATA15) from Arabidopsis thaliana (Mouse-ear cress).